We begin with the raw amino-acid sequence, 119 residues long: Large ribosomal subunit protein bL20 (119 aa).

Belongs to the bacterial ribosomal protein bL20 family.

In terms of biological role, binds directly to 23S ribosomal RNA and is necessary for the in vitro assembly process of the 50S ribosomal subunit. It is not involved in the protein synthesizing functions of that subunit. The polypeptide is Large ribosomal subunit protein bL20 (Bacillus velezensis (strain DSM 23117 / BGSC 10A6 / LMG 26770 / FZB42) (Bacillus amyloliquefaciens subsp. plantarum)).